Reading from the N-terminus, the 146-residue chain is Probable U6 snRNA-associated Sm-like protein LSm4 (146 aa).

In terms of domain architecture, Sm spans 2 to 75 (LPLSLLKTAQ…IKYLRVPDEV (74 aa)). Residues 80–91 (QEEAKSRTDRKP) show a composition bias toward basic and acidic residues. Residues 80 to 146 (QEEAKSRTDR…GGRGGGRGRG (67 aa)) form a disordered region. Gly residues predominate over residues 137-146 (GGRGGGRGRG).

It belongs to the snRNP Sm proteins family. LSm subunits form a heteromer with a doughnut shape.

It is found in the nucleus. Functionally, binds specifically to the 3'-terminal U-tract of U6 snRNA. The polypeptide is Probable U6 snRNA-associated Sm-like protein LSm4 (Nicotiana tabacum (Common tobacco)).